The primary structure comprises 463 residues: Adenosylhomocysteinase (463 aa).

Positions 54, 129, and 189 each coordinate substrate. Threonine 190–threonine 192 serves as a coordination point for NAD(+). Substrate contacts are provided by lysine 219 and aspartate 223. NAD(+) is bound by residues asparagine 224, glycine 253–glycine 258, glutamate 276, asparagine 311, isoleucine 332–histidine 334, and asparagine 377.

It belongs to the adenosylhomocysteinase family. Requires NAD(+) as cofactor.

It localises to the cytoplasm. The catalysed reaction is S-adenosyl-L-homocysteine + H2O = L-homocysteine + adenosine. Its pathway is amino-acid biosynthesis; L-homocysteine biosynthesis; L-homocysteine from S-adenosyl-L-homocysteine: step 1/1. Functionally, may play a key role in the regulation of the intracellular concentration of adenosylhomocysteine. This is Adenosylhomocysteinase from Caulobacter vibrioides (strain ATCC 19089 / CIP 103742 / CB 15) (Caulobacter crescentus).